Reading from the N-terminus, the 279-residue chain is Thymidylate synthase (279 aa).

133–134 is a dUMP binding site; sequence RR. Cys-154 acts as the Nucleophile in catalysis. DUMP is bound by residues 178–181, Asn-189, and 219–221; these read RSND and HIY. Asp-181 contacts (6R)-5,10-methylene-5,6,7,8-tetrahydrofolate. Ala-278 serves as a coordination point for (6R)-5,10-methylene-5,6,7,8-tetrahydrofolate.

Belongs to the thymidylate synthase family. Bacterial-type ThyA subfamily. Homodimer.

The protein resides in the cytoplasm. The enzyme catalyses dUMP + (6R)-5,10-methylene-5,6,7,8-tetrahydrofolate = 7,8-dihydrofolate + dTMP. The protein operates within pyrimidine metabolism; dTTP biosynthesis. Functionally, catalyzes the reductive methylation of 2'-deoxyuridine-5'-monophosphate (dUMP) to 2'-deoxythymidine-5'-monophosphate (dTMP) while utilizing 5,10-methylenetetrahydrofolate (mTHF) as the methyl donor and reductant in the reaction, yielding dihydrofolate (DHF) as a by-product. This enzymatic reaction provides an intracellular de novo source of dTMP, an essential precursor for DNA biosynthesis. This is Thymidylate synthase from Streptococcus pyogenes serotype M3 (strain SSI-1).